Here is an 84-residue protein sequence, read N- to C-terminus: DNA-directed RNA polymerase subunit Rpo5 (84 aa).

The protein belongs to the archaeal Rpo5/eukaryotic RPB5 RNA polymerase subunit family. In terms of assembly, part of the 13-subunit RNA polymerase.

The protein resides in the cytoplasm. It catalyses the reaction RNA(n) + a ribonucleoside 5'-triphosphate = RNA(n+1) + diphosphate. Functionally, DNA-dependent RNA polymerase (RNAP) catalyzes the transcription of DNA into RNA using the four ribonucleoside triphosphates as substrates. In terms of biological role, reconstitution experiments show this subunit is required for basic activity. In Sulfolobus acidocaldarius (strain ATCC 33909 / DSM 639 / JCM 8929 / NBRC 15157 / NCIMB 11770), this protein is DNA-directed RNA polymerase subunit Rpo5.